We begin with the raw amino-acid sequence, 111 residues long: Large ribosomal subunit protein uL24 (111 aa).

Residues 43-62 (TRHKKKDQTTKRAAKQSTGK) are disordered.

This sequence belongs to the universal ribosomal protein uL24 family. In terms of assembly, part of the 50S ribosomal subunit.

Functionally, one of two assembly initiator proteins, it binds directly to the 5'-end of the 23S rRNA, where it nucleates assembly of the 50S subunit. In terms of biological role, one of the proteins that surrounds the polypeptide exit tunnel on the outside of the subunit. The chain is Large ribosomal subunit protein uL24 from Mycoplasma pneumoniae (strain ATCC 29342 / M129 / Subtype 1) (Mycoplasmoides pneumoniae).